Consider the following 150-residue polypeptide: Small ribosomal subunit protein uS11 (150 aa).

Belongs to the universal ribosomal protein uS11 family. As to quaternary structure, part of the 30S ribosomal subunit. Interacts with proteins S7 and S18. Binds to IF-3.

In terms of biological role, located on the platform of the 30S subunit, it bridges several disparate RNA helices of the 16S rRNA. Forms part of the Shine-Dalgarno cleft in the 70S ribosome. The chain is Small ribosomal subunit protein uS11 from Pelagibacter ubique (strain HTCC1062).